The chain runs to 133 residues: Histone H2A (133 aa).

Gly residues predominate over residues 1–10; sequence MTGGKSGGKA. The interval 1-24 is disordered; the sequence is MTGGKSGGKASGSKNAQSRSSKAG. Residues Lys5 and Lys9 each carry the N6-acetyllysine modification. Gln106 bears the N5-methylglutamine mark. Ser130 is subject to Phosphoserine. A [ST]-Q motif motif is present at residues 130–131; it reads SQ.

Belongs to the histone H2A family. The nucleosome is a histone octamer containing two molecules each of H2A, H2B, H3 and H4 assembled in one H3-H4 heterotetramer and two H2A-H2B heterodimers. The octamer wraps approximately 147 bp of DNA. Phosphorylated to form H2AS128ph (gamma-H2A) in response to DNA double-strand breaks (DSBs) generated by exogenous genotoxic agents and by stalled replication forks. Phosphorylation is dependent on the DNA damage checkpoint kinases mec1/ATR and tel1/ATM, spreads on either side of a detected DSB site and may mark the surrounding chromatin for recruitment of proteins required for DNA damage signaling and repair. Gamma-H2A is removed from the DNA prior to the strand invasion-primer extension step of the repair process and subsequently dephosphorylated. Dephosphorylation is necessary for efficient recovery from the DNA damage checkpoint. Post-translationally, acetylated by esa1 to form H2AK4ac and H2AK7ac.

It localises to the nucleus. It is found in the chromosome. Functionally, core component of nucleosome which plays a central role in DNA double strand break (DSB) repair. Nucleosomes wrap and compact DNA into chromatin, limiting DNA accessibility to the cellular machineries which require DNA as a template. Histones thereby play a central role in transcription regulation, DNA repair, DNA replication and chromosomal stability. DNA accessibility is regulated via a complex set of post-translational modifications of histones, also called histone code, and nucleosome remodeling. This is Histone H2A (hta1) from Aspergillus clavatus (strain ATCC 1007 / CBS 513.65 / DSM 816 / NCTC 3887 / NRRL 1 / QM 1276 / 107).